Here is a 260-residue protein sequence, read N- to C-terminus: Small ribosomal subunit protein uS2 (260 aa).

Belongs to the universal ribosomal protein uS2 family.

The sequence is that of Small ribosomal subunit protein uS2 (rpsB) from Borreliella burgdorferi (strain ATCC 35210 / DSM 4680 / CIP 102532 / B31) (Borrelia burgdorferi).